Here is a 286-residue protein sequence, read N- to C-terminus: ATP synthase gamma chain (286 aa).

The protein belongs to the ATPase gamma chain family. As to quaternary structure, F-type ATPases have 2 components, CF(1) - the catalytic core - and CF(0) - the membrane proton channel. CF(1) has five subunits: alpha(3), beta(3), gamma(1), delta(1), epsilon(1). CF(0) has three main subunits: a, b and c.

The protein resides in the cell inner membrane. Produces ATP from ADP in the presence of a proton gradient across the membrane. The gamma chain is believed to be important in regulating ATPase activity and the flow of protons through the CF(0) complex. The sequence is that of ATP synthase gamma chain from Shewanella loihica (strain ATCC BAA-1088 / PV-4).